We begin with the raw amino-acid sequence, 306 residues long: Pantothenate kinase (306 aa).

91-98 (GSVAVGKS) contacts ATP.

Belongs to the prokaryotic pantothenate kinase family.

It is found in the cytoplasm. The catalysed reaction is (R)-pantothenate + ATP = (R)-4'-phosphopantothenate + ADP + H(+). The protein operates within cofactor biosynthesis; coenzyme A biosynthesis; CoA from (R)-pantothenate: step 1/5. This Streptococcus equi subsp. equi (strain 4047) protein is Pantothenate kinase.